Here is a 692-residue protein sequence, read N- to C-terminus: ABC1 family protein C21C3.03, mitochondrial (692 aa).

Residues 1–91 (MISFSHWNSH…RKFTTRQKSE (91 aa)) constitute a mitochondrion transit peptide. Helical transmembrane passes span 96-116 (WRIL…LWIL) and 161-181 (LFII…ISFL).

This sequence belongs to the protein kinase superfamily. ADCK protein kinase family.

It is found in the mitochondrion membrane. The polypeptide is ABC1 family protein C21C3.03, mitochondrial (Schizosaccharomyces pombe (strain 972 / ATCC 24843) (Fission yeast)).